The primary structure comprises 1021 residues: Sodium/potassium-transporting ATPase subunit alpha-1 (1021 aa).

Positions 1-5 (MGKGV) are excised as a propeptide. Residues 1–11 (MGKGVGRDKYE) show a composition bias toward basic and acidic residues. The interval 1-36 (MGKGVGRDKYEPAAVSEHGDKKKAKKERDMDELKKE) is disordered. Residues 4 to 85 (GVGRDKYEPA…NALTPPPTTP (82 aa)) lie on the Cytoplasmic side of the membrane. An N6-acetyllysine modification is found at K9. Y10 carries the phosphotyrosine modification. S16 bears the Phosphoserine; by PKC mark. Residue K21 is modified to N6-acetyllysine. The span at 26–36 (KERDMDELKKE) shows a compositional bias: basic and acidic residues. 2 positions are modified to phosphoserine: S38 and S45. Residues 80–82 (PPP) are phosphoinositide-3 kinase binding. Residues 86-106 (EWVKFCRQLFGGFSMLLWIGA) traverse the membrane as a helical segment. Topologically, residues 107 to 129 (ILCFLAYGIQAATEEEPQNDNLY) are extracellular. A helical membrane pass occupies residues 130-150 (LGVVLSAVVIITGCFSYYQEA). Residues 151 to 286 (KSSKIMESFK…GGQTPIAAEI (136 aa)) lie on the Cytoplasmic side of the membrane. Positions 214–233 (SSLTGESEPQTRSPDFTNEN) are disordered. Phosphoserine is present on S226. Y258 carries the post-translational modification Phosphotyrosine. Residues 287-306 (EHFIHIITGVAVFLGVSFFI) form a helical membrane-spanning segment. Over 307–318 (LSLILEYTWLEA) the chain is Extracellular. A helical membrane pass occupies residues 319–336 (VIFLIGIIVANVPEGLLA). The Cytoplasmic segment spans residues 337 to 770 (TVTVCLTLTA…EEGRLIFDNL (434 aa)). The active-site 4-aspartylphosphate intermediate is the D374. Residues S450 and S482 each carry the phosphoserine modification. K485 is an ATP binding site. Y540 carries the phosphotyrosine modification. The tract at residues 594–715 (RAAVPDAVGK…QGAIVAVTGD (122 aa)) is mediates interaction with SCN7A. At K659 the chain carries N6-succinyllysine. S666 and S673 each carry phosphoserine. Positions 715 and 719 each coordinate Mg(2+). Residues 771-790 (KKSIAYTLTSNIPEITPFLI) form a helical membrane-spanning segment. The Extracellular portion of the chain corresponds to 791–800 (FIIANIPLPL). A helical membrane pass occupies residues 801–821 (GTVTILCIDLGTDMVPAISLA). The Cytoplasmic segment spans residues 822–841 (YEQAESDIMKRQPRNPKTDK). The helical transmembrane segment at 842 to 864 (LVNERLISMAYGQIGMIQALGGF) threads the bilayer. The Extracellular segment spans residues 865-916 (FTYFVILAENGFLPTHLLGLRVDWDDRWINDVEDSYGQQWTYEQRKIVEFTC). Residues 917 to 936 (HTAFFVSIVVVQWADLVICK) form a helical membrane-spanning segment. Residues 937-949 (TRRNSVFQQGMKN) lie on the Cytoplasmic side of the membrane. S941 carries the post-translational modification Phosphoserine; by PKA. The helical transmembrane segment at 950–968 (KILIFGLFEETALAAFLSY) threads the bilayer. The Extracellular segment spans residues 969 to 983 (CPGMGVALRMYPLKP). A helical transmembrane segment spans residues 984–1004 (TWWFCAFPYSLLIFVYDEVRK). Residues 1005–1021 (LIIRRRPGGWVEKETYY) are Cytoplasmic-facing.

This sequence belongs to the cation transport ATPase (P-type) (TC 3.A.3) family. Type IIC subfamily. As to quaternary structure, the sodium/potassium-transporting ATPase is composed of a catalytic alpha subunit, an auxiliary non-catalytic beta subunit and an additional regulatory subunit. Interacts with regulatory subunit FXYD1. Interacts with regulatory subunit FXYD3. Interacts with SIK1. Interacts with SLC35G1 and STIM1. Interacts with CLN3; this interaction regulates the sodium/potassium-transporting ATPase complex localization at the plasma membrane. Interacts with SCN7A; activates ATP1A1 P-type sodium:potassium-exchanging transporter activity which indirectly signals to nearby neurons to regulate sodium homeostasis. In terms of processing, phosphorylation on Tyr-10 modulates pumping activity. Phosphorylation of Ser-941 by PKA modulates the response of ATP1A1 to PKC. Dephosphorylation by protein phosphatase 2A (PP2A) following increases in intracellular sodium, leading to increase catalytic activity.

The protein resides in the cell membrane. It localises to the basolateral cell membrane. The protein localises to the sarcolemma. Its subcellular location is the cell projection. It is found in the axon. The protein resides in the melanosome. The enzyme catalyses K(+)(out) + Na(+)(in) + ATP + H2O = K(+)(in) + Na(+)(out) + ADP + phosphate + H(+). In terms of biological role, this is the catalytic component of the active enzyme, which catalyzes the hydrolysis of ATP coupled with the exchange of sodium and potassium ions across the plasma membrane. This action creates the electrochemical gradient of sodium and potassium ions, providing the energy for active transport of various nutrients. Could also be part of an osmosensory signaling pathway that senses body-fluid sodium levels and controls salt intake behavior as well as voluntary water intake to regulate sodium homeostasis. The protein is Sodium/potassium-transporting ATPase subunit alpha-1 (ATP1A1) of Canis lupus familiaris (Dog).